The sequence spans 423 residues: MARSNYLRIFRVLEEINRRRTIPDIYHEALEDRLVITFTQPSGPLKRSKTRRPKKEYKLQYENTKAHRVYVEILEDYPQLFIPFILATPPKSCETFKLGEFREKHDLSAVKVDLRPDIRRTLDNIANRKGFNQNRRYRRLICTLFPSGRKPATTAETQNCWAYRAAYLNAVHTIFSEQICSAMEVSPTAHSPECQAPQTTSCVEMKLPKQNYQDAIVLLELSLPIDTIKILFPSANERIICSLSPQSGRGPEPSTQIAEPGRHDSQSEQSTISQSEGYILRGASISAILSVFGPRIWGAIEKSQLRKWEKDNLSEETTDCVSIEIHPRRPHCSTCRVRIGFIDDSHFRRKTVHLSLSLSAPNPLALLILEFNIFAVETVEPSFVVFRKYIIHWMFVAVIEEARRNSKGFPKGALQCCEYIHKD.

Residues 46 to 69 (KRSKTRRPKKEYKLQYENTKAHRV) carry the Bipartite nuclear localization signal motif. Residues 157 to 187 (TQNCWAYRAAYLNAVHTIFSEQICSAMEVSP) are RNA recognition motif (RRM)-like domain. The segment covering 243 to 257 (LSPQSGRGPEPSTQI) has biased composition (polar residues). A disordered region spans residues 243–273 (LSPQSGRGPEPSTQIAEPGRHDSQSEQSTIS).

The protein belongs to the hrmA family.

The protein resides in the nucleus. In terms of biological role, probably modulates the generation of the hypoxia-typic morphotype (called H-MORPH) with altered biofilm architecture that leads to increased host inflammation, rapid disease progression, and mortality in a murine model of invasive aspergillosis. This chain is Hypoxia responsive morphology factor B, found in Aspergillus fumigatus (strain CBS 144.89 / FGSC A1163 / CEA10) (Neosartorya fumigata).